A 179-amino-acid polypeptide reads, in one-letter code: MSRIGKQPVPVPAGVDVTIEGQNVSVKGPKGTLSLAVAEPIVVARDDEGAIVVTRPNDERRNRSLHGLSRTLVANLVEGVTQGYTTKMEIYGVGYRVALKGSNLEFALGYSHPVVIEPPEGITFAVETPTKFSVSGIDKQKVGQISAIIRRLRRPDPYKGKGVRYEGEQIRRKVGKTGK.

It belongs to the universal ribosomal protein uL6 family. Part of the 50S ribosomal subunit.

Functionally, this protein binds to the 23S rRNA, and is important in its secondary structure. It is located near the subunit interface in the base of the L7/L12 stalk, and near the tRNA binding site of the peptidyltransferase center. The chain is Large ribosomal subunit protein uL6 from Mycobacterium sp. (strain KMS).